Reading from the N-terminus, the 124-residue chain is Snaclec rhodocetin subunit delta (124 aa).

3 disulfides stabilise this stretch: cysteine 1/cysteine 12, cysteine 29/cysteine 120, and cysteine 95/cysteine 112. The C-type lectin domain maps to 8 to 121 (YNGYCYRVFS…CEKTVSFVCK (114 aa)).

The protein belongs to the snaclec family. Heterotetramer of subunit alpha, beta, gamma and delta; only the gamma and the delta subunits are disulfide-linked. Alpha-beta heterodimer and gamma-delta heterodimer associate orthogonally, giving a cruciform conformation. This heterotetramer may covalently dimerizes thanks to the gamma subunit. Expressed by the venom gland.

Its subcellular location is the secreted. Its function is as follows. Potent inhibitor of collagen-induced platelet aggregation. It acts by binding to the integrin alpha2A domain and blocks collagen binding to integrin alpha-2/beta-1 (ITGA2/ITGB1). The gamma/delta subunits mainly contribute to this activity. In Calloselasma rhodostoma (Malayan pit viper), this protein is Snaclec rhodocetin subunit delta.